The sequence spans 485 residues: Two-component response regulator ORR31 (485 aa).

Residues 13-138 (RVMPVDGDTK…TMAQLWRVVA (126 aa)) enclose the Response regulatory domain. Residue D66 is modified to 4-aspartylphosphate. The span at 195 to 204 (LTINVDSGSS) shows a compositional bias: polar residues. Residues 195-236 (LTINVDSGSSDGADANPRQKLEHKKDAKGPLGQHVASHLQPQ) are disordered. Residues 211–222 (PRQKLEHKKDAK) are compositionally biased toward basic and acidic residues.

The protein belongs to the ARR family. Type-B subfamily. Two-component system major event consists of a His-to-Asp phosphorelay between a sensor histidine kinase (HK) and a response regulator (RR). In plants, the His-to-Asp phosphorelay involves an additional intermediate named Histidine-containing phosphotransfer protein (HPt). This multistep phosphorelay consists of a His-Asp-His-Asp sequential transfer of a phosphate group between first a His and an Asp of the HK protein, followed by the transfer to a conserved His of the HPt protein and finally the transfer to an Asp in the receiver domain of the RR protein.

In terms of biological role, functions as a response regulator involved in His-to-Asp phosphorelay signal transduction system. Phosphorylation of the Asp residue in the receiver domain activates the ability of the protein to promote the transcription of target genes. May directly activate some type-A response regulators in response to cytokinins. This chain is Two-component response regulator ORR31, found in Oryza sativa subsp. japonica (Rice).